The chain runs to 239 residues: Probable GTP-binding protein EngB (239 aa).

The EngB-type G domain occupies 23-219; that stretch reads QVPEIAFAGR…NDKILELLGL (197 aa). Residues 31 to 38, 58 to 62, 92 to 95, 159 to 162, and 193 to 200 contribute to the GTP site; these read GRSNAGKS, GRTQH, DLPG, TKSD, and FTAQLFSA. Positions 38 and 60 each coordinate Mg(2+).

This sequence belongs to the TRAFAC class TrmE-Era-EngA-EngB-Septin-like GTPase superfamily. EngB GTPase family. Mg(2+) is required as a cofactor.

Necessary for normal cell division and for the maintenance of normal septation. This Herminiimonas arsenicoxydans protein is Probable GTP-binding protein EngB.